A 116-amino-acid polypeptide reads, in one-letter code: uncharacterized protein (116 aa).

A helical transmembrane segment spans residues 89–109 (VGFVILILLYILTNPNAIELI).

This sequence belongs to the M.jannaschii MJ0023/MJ0349/MJ1072/MJ1074/MJ1107/MJECL16 family.

Its subcellular location is the membrane. This is an uncharacterized protein from Methanocaldococcus jannaschii (strain ATCC 43067 / DSM 2661 / JAL-1 / JCM 10045 / NBRC 100440) (Methanococcus jannaschii).